We begin with the raw amino-acid sequence, 316 residues long: Peroxidase 31 (316 aa).

The signal sequence occupies residues 1–19 (MASLKSLFLLFLFFFTAQS). Intrachain disulfides connect Cys30-Cys111, Cys63-Cys68, Cys117-Cys312, and Cys196-Cys222. His61 acts as the Proton acceptor in catalysis. Residues Asp62, Gly67, Asp69, and Ser71 each coordinate Ca(2+). A substrate-binding site is contributed by Pro159. Position 189 (His189) interacts with heme b. Residue Ser190 participates in Ca(2+) binding. An N-linked (GlcNAc...) asparagine glycan is attached at Asn206. Ca(2+) contacts are provided by Asp236, Thr239, and Asp244.

This sequence belongs to the peroxidase family. Classical plant (class III) peroxidase subfamily. It depends on heme b as a cofactor. Requires Ca(2+) as cofactor.

The protein localises to the secreted. The enzyme catalyses 2 a phenolic donor + H2O2 = 2 a phenolic radical donor + 2 H2O. In terms of biological role, removal of H(2)O(2), oxidation of toxic reductants, biosynthesis and degradation of lignin, suberization, auxin catabolism, response to environmental stresses such as wounding, pathogen attack and oxidative stress. These functions might be dependent on each isozyme/isoform in each plant tissue. In Arabidopsis thaliana (Mouse-ear cress), this protein is Peroxidase 31 (PER31).